A 529-amino-acid chain; its full sequence is Delayed-rectifier potassium channel regulatory subunit KCNS1 (529 aa).

The Cytoplasmic portion of the chain corresponds to 1–217 (MLMLLVRGTR…LTMENPGYSL (217 aa)). The helical transmembrane segment at 218-239 (PSKLFSCVSISVVLASIAAMCI) threads the bilayer. Topologically, residues 240–270 (HSLPEYQAREAAAAVAAVAAGRSPEGVRDDP) are extracellular. A helical membrane pass occupies residues 271-293 (VLRRLEYFCIAWFSFEVSSRLLL). At 294 to 304 (APSTRNFFCHP) the chain is on the cytoplasmic side. The chain crosses the membrane as a helical span at residues 305–322 (LNLIDIVSVLPFYLTLLA). The Extracellular portion of the chain corresponds to 323–340 (GVALGDQGGTGGKELGHL). Residues 341–361 (GKVVQVFRLMRIFRVLKLARH) traverse the membrane as a helical; Voltage-sensor segment. The Cytoplasmic segment spans residues 362–376 (STGLRSLGATLKHSY). A helical transmembrane segment spans residues 377 to 398 (REVGILLLYLAVGVSVFSGVAY). The Extracellular portion of the chain corresponds to 399-411 (TAEKEEDVGFNTI). Residues 412 to 423 (PACWWWGTVSMT) constitute an intramembrane region (helical). Residues 424 to 429 (TVGYGD) carry the Selectivity filter motif. The stretch at 424-431 (TVGYGDVV) is an intramembrane region. Residues 432-438 (PVTVAGK) are Extracellular-facing. The chain crosses the membrane as a helical span at residues 439 to 467 (LAASGCILGGILVVALPITIIFNKFSHFY). At 468–529 (RRQKALEAAV…PSEPPHPQMY (62 aa)) the chain is on the cytoplasmic side. Residues 500 to 529 (LETSREISQEGRSADLETQAPSEPPHPQMY) are disordered. Over residues 502-514 (TSREISQEGRSAD) the composition is skewed to basic and acidic residues.

This sequence belongs to the potassium channel family. S (TC 1.A.1.2) subfamily. Kv9.1/KCNS1 sub-subfamily. As to quaternary structure, heterotetramer with KCNB1. Heterotetramer with KCNB2. Does not form homomultimers.

The protein resides in the cell membrane. Its function is as follows. Potassium channel regulatory subunit that modulate the delayed rectifier voltage-gated potassium channel activity of KCNB1 and KCNB2 by altering their kinetics, expression levels, and shifting the half-inactivation potential to more polarized values. While it does not form functional channels on its own, it can form functional heterotetrameric channels with KCNB1 and KCNB2. Each regulatory subunit has unique regulatory properties that can lead to extensive inhibition, significant changes in kinetics, and/or substantial shifts in the voltage dependencies of the inactivation process. In Colobus guereza (Mantled guereza), this protein is Delayed-rectifier potassium channel regulatory subunit KCNS1.